We begin with the raw amino-acid sequence, 393 residues long: Pectate lyase A (393 aa).

Positions 1–32 are cleaved as a signal peptide; sequence MMNKASGRSFTRSSKYLLATLIAGMMASGVSA. Ca(2+) is bound by residues E174, D176, D216, and D220. The active site involves R273. C330 and C358 are disulfide-bonded.

It belongs to the polysaccharide lyase 1 family. PLADES subfamily. Requires Ca(2+) as cofactor.

The protein resides in the secreted. It catalyses the reaction Eliminative cleavage of (1-&gt;4)-alpha-D-galacturonan to give oligosaccharides with 4-deoxy-alpha-D-galact-4-enuronosyl groups at their non-reducing ends.. The protein operates within glycan metabolism; pectin degradation; 2-dehydro-3-deoxy-D-gluconate from pectin: step 2/5. Functionally, involved in maceration and soft-rotting of plant tissue. The chain is Pectate lyase A (pelA) from Dickeya chrysanthemi (Pectobacterium chrysanthemi).